Reading from the N-terminus, the 884-residue chain is Microsomal triglyceride transfer protein large subunit (884 aa).

The first 21 residues, 1-21 (MMPVAGLLLCVTAVLCTSALG), serve as a signal peptide directing secretion. The 635-residue stretch at 26 to 660 (LDNGKLYRYS…QSNNALLHGL (635 aa)) folds into the Vitellogenin domain. Cys172 and Cys192 are joined by a disulfide. Asn348 carries N-linked (GlcNAc...) asparagine glycosylation. An intrachain disulfide couples Cys438 to Cys443. Asn787 carries an N-linked (GlcNAc...) asparagine glycan.

In terms of assembly, heterodimer; heterodimerizes with the protein disulfide isomerase. In terms of tissue distribution, highest expression in the proximal part of the anterior intestine. Lower expression in the distal part of the anterior intestine, in the posterior portion of the intestinal tube and liver. Very low expression levels in heart, brain, ovary, testis and kidney.

Its subcellular location is the endoplasmic reticulum. The protein localises to the golgi apparatus. The catalysed reaction is a 1,2-diacyl-sn-glycero-3-phosphocholine(in) = a 1,2-diacyl-sn-glycero-3-phosphocholine(out). It catalyses the reaction a 1,2-diacyl-sn-glycero-3-phosphoethanolamine(in) = a 1,2-diacyl-sn-glycero-3-phosphoethanolamine(out). It carries out the reaction a cholesterol ester(in) = a cholesterol ester(out). The enzyme catalyses a triacyl-sn-glycerol(in) = a triacyl-sn-glycerol(out). Its activity is regulated as follows. Inhibited by naringenin. Its function is as follows. Catalyzes the transport of triglyceride between phospholipid surfaces. Catalyzes the transport of cholesteryl ester, and phospholipid between phospholipid surfaces. Required for the assembly and secretion of plasma lipoproteins that contain apolipoprotein B. Required for yolk lipid utilization and absorption of dietary lipids in larvae. The polypeptide is Microsomal triglyceride transfer protein large subunit (Danio rerio (Zebrafish)).